Consider the following 428-residue polypeptide: Glutamate-1-semialdehyde 2,1-aminomutase (428 aa).

An N6-(pyridoxal phosphate)lysine modification is found at Lys266.

Belongs to the class-III pyridoxal-phosphate-dependent aminotransferase family. HemL subfamily. Homodimer. The cofactor is pyridoxal 5'-phosphate.

It is found in the cytoplasm. It catalyses the reaction (S)-4-amino-5-oxopentanoate = 5-aminolevulinate. It functions in the pathway porphyrin-containing compound metabolism; protoporphyrin-IX biosynthesis; 5-aminolevulinate from L-glutamyl-tRNA(Glu): step 2/2. The polypeptide is Glutamate-1-semialdehyde 2,1-aminomutase (Herminiimonas arsenicoxydans).